Consider the following 118-residue polypeptide: UPF0125 protein RSc1426 (118 aa).

Belongs to the UPF0125 (RnfH) family.

This Ralstonia nicotianae (strain ATCC BAA-1114 / GMI1000) (Ralstonia solanacearum) protein is UPF0125 protein RSc1426.